We begin with the raw amino-acid sequence, 346 residues long: Endo-1,4-beta-xylanase B (346 aa).

The signal sequence occupies residues Met1 to Gly19. Positions Gly41–Leu338 constitute a GH10 domain. Glu153 (proton donor) is an active-site residue. Glu259 functions as the Nucleophile in the catalytic mechanism.

It belongs to the glycosyl hydrolase 10 (cellulase F) family.

It catalyses the reaction Endohydrolysis of (1-&gt;4)-beta-D-xylosidic linkages in xylans.. The sequence is that of Endo-1,4-beta-xylanase B (xynB) from Thermotoga neapolitana.